Here is a 526-residue protein sequence, read N- to C-terminus: MGKIIKSLSRFGKKVGNALTSNTAKKIYSTIGKAAERFAESEIGAATIDGLVQGSVHSIITGESYGESVKQAVLLNVLGTGEELPDPLSPGERGIQTKIKELEDEQRNELVRLKYNKEITKEFGKELEEVYDFMNGEAKEEEVVQEQYSMLCKAVDSYEKILKAEDSKMAMLARALQREASERSQDEIKMVKEYRQKIDALKNAIEIERDGMQEEAIQEIAGMTADVLEAASEEVPLIGAGMATAVATGRAIEGAYKLKKVINALSGIDLSHMRSPKIEPTIIATTLEHRFKEIPDEQLAVSVLNKKTAVTDNCNEIAHIKQEILPKFKQIMDEEKEIEGIEDKVIHPRVMMRFKIPRTQQPQIHIYAAPWDSDDVFFFHCVSHHHRNESFFLGFDLGIDVVHFEDLTSHWHALGLAQEASGRTLTEAYREFLNLSISSTYSSAIHARRMIRSRAVHPIFLGSMHYDITYEALKNNAQRIVYDEELQMHILRGPLHFQRRAILGALKFGVKILGDKIDVPLFLRNA.

The tract at residues M1–E42 is involved in membrane permeabilization.

This sequence belongs to the orbivirus VP5 family.

The protein localises to the virion. Functionally, VP5 protein is one of the two proteins (with VP2) which constitute the virus particle outer capsid. Acts as a membrane permeabilization protein that mediates release of viral particles from endosomal compartments into the cytoplasm. Permeabilization activity is probably negatively regulated by VP2 and is triggered by endosomal degradation of VP2 and exposure to low pH. This is Outer capsid protein VP5 (Segment-6) from Bluetongue virus 11 (isolate USA) (BTV 11).